Reading from the N-terminus, the 57-residue chain is Potassium channel toxin alpha-KTx 1.5 (57 aa).

A signal peptide spans 1 to 20; that stretch reads MKISFLLLALVICSIGWSEA. Gln21 bears the Pyrrolidone carboxylic acid mark. Cystine bridges form between Cys27/Cys48, Cys33/Cys53, and Cys37/Cys55.

The protein belongs to the short scorpion toxin superfamily. Potassium channel inhibitor family. Alpha-KTx 01 subfamily. In terms of tissue distribution, expressed by the venom gland.

The protein resides in the secreted. Potent blocker of both large-conductance calcium-activated potassium channels (KCa1.1/KCNMA1) and voltage-gated potassium channels (Kv1.3/KCNA3). Has also been shown to moderately inhibit Kv1.2/KCNA2 and weakly inhibit Kv1.1/KCNA1 channels, as well as 5-hydroxytryptamine 3 receptors (HTR3A). The sequence is that of Potassium channel toxin alpha-KTx 1.5 from Olivierus martensii (Manchurian scorpion).